A 207-amino-acid polypeptide reads, in one-letter code: LexA repressor (207 aa).

Residues 28-48 constitute a DNA-binding region (H-T-H motif); the sequence is RAEIARELGFRSANAAEEHLK. Residues serine 124 and lysine 161 each act as for autocatalytic cleavage activity in the active site.

This sequence belongs to the peptidase S24 family. In terms of assembly, homodimer.

It carries out the reaction Hydrolysis of Ala-|-Gly bond in repressor LexA.. In terms of biological role, represses a number of genes involved in the response to DNA damage (SOS response), including recA and lexA. In the presence of single-stranded DNA, RecA interacts with LexA causing an autocatalytic cleavage which disrupts the DNA-binding part of LexA, leading to derepression of the SOS regulon and eventually DNA repair. The polypeptide is LexA repressor (Aliivibrio salmonicida (strain LFI1238) (Vibrio salmonicida (strain LFI1238))).